A 110-amino-acid polypeptide reads, in one-letter code: Large ribosomal subunit protein mL60 (110 aa).

This sequence belongs to the mitochondrion-specific ribosomal protein mL60 family. Component of the mitochondrial large ribosomal subunit (mt-LSU). Mature N.crassa 74S mitochondrial ribosomes consist of a small (37S) and a large (54S) subunit. The 37S small subunit contains a 16S ribosomal RNA (16S mt-rRNA) and 32 different proteins. The 54S large subunit contains a 23S rRNA (23S mt-rRNA) and 42 different proteins.

The protein localises to the mitochondrion. Functionally, component of the mitochondrial ribosome (mitoribosome), a dedicated translation machinery responsible for the synthesis of mitochondrial genome-encoded proteins, including at least some of the essential transmembrane subunits of the mitochondrial respiratory chain. The mitoribosomes are attached to the mitochondrial inner membrane and translation products are cotranslationally integrated into the membrane. The protein is Large ribosomal subunit protein mL60 (mrpl31) of Neurospora crassa (strain ATCC 24698 / 74-OR23-1A / CBS 708.71 / DSM 1257 / FGSC 987).